We begin with the raw amino-acid sequence, 578 residues long: Sulfite reductase [NADPH] hemoprotein beta-component (578 aa).

Cys-441, Cys-447, Cys-487, and Cys-491 together coordinate [4Fe-4S] cluster. Cys-491 provides a ligand contact to siroheme.

This sequence belongs to the nitrite and sulfite reductase 4Fe-4S domain family. As to quaternary structure, alpha(8)-beta(8). The alpha component is a flavoprotein, the beta component is a hemoprotein. The cofactor is siroheme. It depends on [4Fe-4S] cluster as a cofactor.

It carries out the reaction hydrogen sulfide + 3 NADP(+) + 3 H2O = sulfite + 3 NADPH + 4 H(+). It functions in the pathway sulfur metabolism; hydrogen sulfide biosynthesis; hydrogen sulfide from sulfite (NADPH route): step 1/1. Its function is as follows. Component of the sulfite reductase complex that catalyzes the 6-electron reduction of sulfite to sulfide. This is one of several activities required for the biosynthesis of L-cysteine from sulfate. In Vibrio vulnificus (strain CMCP6), this protein is Sulfite reductase [NADPH] hemoprotein beta-component.